A 407-amino-acid chain; its full sequence is MQRVFIMVLDSFGIGAAEDADKFGDRGSDTLGHIAERCERGDANHGRKGPLKLPNLTRLGLAKAAEQSTGRFPAGLDKQAEIVGAYAYASEISSGKDTLSGHWEIAGVPVLFDWGYFPAVENSFPPKLLEALVARAGLPGFLGNCHASGTVILDRLGEEHMRTGKPIFYTSADSVFQLACHEETFGLERLYSLCEIAREILTDGGYNIGRVITRPFVGAKAGQFERTGNRHDLAVPPPSATMLQKLVEEKGGTVVSVGKIADIYAQVGISKKVKATGLDALFDATVREMDAAGENTLVFTNFVDFDSAYGHRRDVAGYAAALELFDRRLPELMSRVQGNDILILTADHGCDPTWHGTDHTREHVPVLIYGPTVNPGFYGHRTTFADIGQTVARYFGLSPMDYGKAIM.

Mn(2+) is bound by residues Asp10, Asp306, His311, Asp347, His348, and His359.

Belongs to the phosphopentomutase family. Requires Mn(2+) as cofactor.

The protein localises to the cytoplasm. The catalysed reaction is 2-deoxy-alpha-D-ribose 1-phosphate = 2-deoxy-D-ribose 5-phosphate. It catalyses the reaction alpha-D-ribose 1-phosphate = D-ribose 5-phosphate. It functions in the pathway carbohydrate degradation; 2-deoxy-D-ribose 1-phosphate degradation; D-glyceraldehyde 3-phosphate and acetaldehyde from 2-deoxy-alpha-D-ribose 1-phosphate: step 1/2. Functionally, isomerase that catalyzes the conversion of deoxy-ribose 1-phosphate (dRib-1-P) and ribose 1-phosphate (Rib-1-P) to deoxy-ribose 5-phosphate (dRib-5-P) and ribose 5-phosphate (Rib-5-P), respectively. The polypeptide is Phosphopentomutase (Sodalis glossinidius (strain morsitans)).